A 345-amino-acid chain; its full sequence is Methylthioribose-1-phosphate isomerase (345 aa).

Substrate-binding positions include 44–46 (RGA), Arg86, and Gln194. Catalysis depends on Asp235, which acts as the Proton donor. Residue 245 to 246 (NK) coordinates substrate.

It belongs to the eIF-2B alpha/beta/delta subunits family. MtnA subfamily.

It carries out the reaction 5-(methylsulfanyl)-alpha-D-ribose 1-phosphate = 5-(methylsulfanyl)-D-ribulose 1-phosphate. The protein operates within amino-acid biosynthesis; L-methionine biosynthesis via salvage pathway; L-methionine from S-methyl-5-thio-alpha-D-ribose 1-phosphate: step 1/6. In terms of biological role, catalyzes the interconversion of methylthioribose-1-phosphate (MTR-1-P) into methylthioribulose-1-phosphate (MTRu-1-P). The protein is Methylthioribose-1-phosphate isomerase of Desulfitobacterium hafniense (strain DSM 10664 / DCB-2).